The following is a 103-amino-acid chain: Flagellar hook-basal body complex protein FliE (103 aa).

This sequence belongs to the FliE family.

The protein localises to the bacterial flagellum basal body. In Helicobacter hepaticus (strain ATCC 51449 / 3B1), this protein is Flagellar hook-basal body complex protein FliE.